The following is a 65-amino-acid chain: Prokaryotic ubiquitin-like protein Pup (65 aa).

Positions 1-13 are enriched in basic and acidic residues; sequence MAQEQKQPRKSSE. The interval 1–34 is disordered; it reads MAQEQKQPRKSSEADEAVEAVAETDVSERKEALD. The tract at residues 21 to 59 is ARC ATPase binding; sequence VAETDVSERKEALDSDVDDILDEIDDVLETNAEDFVKSF. Positions 25-49 form a coiled coil; that stretch reads DVSERKEALDSDVDDILDEIDDVLE. Glu65 participates in a covalent cross-link: Isoglutamyl lysine isopeptide (Glu-Lys) (interchain with K-? in acceptor proteins).

The protein belongs to the prokaryotic ubiquitin-like protein family. As to quaternary structure, strongly interacts with the proteasome-associated ATPase ARC through a hydrophobic interface; the interacting region of Pup lies in its C-terminal half. There is one Pup binding site per ARC hexamer ring.

Its pathway is protein degradation; proteasomal Pup-dependent pathway. Its function is as follows. Protein modifier that is covalently attached to lysine residues of substrate proteins, thereby targeting them for proteasomal degradation. The tagging system is termed pupylation. This Nocardioides sp. (strain ATCC BAA-499 / JS614) protein is Prokaryotic ubiquitin-like protein Pup.